Consider the following 205-residue polypeptide: Arginine exporter protein ArgO (205 aa).

6 helical membrane-spanning segments follow: residues 1–21 (MLAVYLHGFILSAAMILPLGP), 42–62 (LCALSDIILICAGIFGGSALL), 67–87 (LLLALVTWGGVAFLMWYGWGA), 111–131 (ILVTLLAVTWLNPHVYLDTFV), 147–167 (WFALGAVTASIVWFFALAFLA), and 185–205 (LFVGGVMGFIAFQLARQGFGL).

The protein belongs to the LysE/ArgO transporter (TC 2.A.75) family.

It is found in the cell inner membrane. It carries out the reaction L-arginine(in) = L-arginine(out). Functionally, involved in the export of arginine. Important to control the intracellular level of arginine and the correct balance between arginine and lysine. In Yersinia pseudotuberculosis serotype O:3 (strain YPIII), this protein is Arginine exporter protein ArgO.